The sequence spans 511 residues: Apolipoprotein N-acyltransferase (511 aa).

6 helical membrane-spanning segments follow: residues 24–44 (LALA…LLYL), 58–78 (GWWY…VSIH), 90–110 (FLML…AWLW), 125–145 (LAFA…LTGF), 163–183 (VPVG…ALLV), and 192–212 (GASL…GLYL). The 241-residue stretch at 230–470 (IQGNIAQELK…QGILRGEVIP (241 aa)) folds into the CN hydrolase domain. Glu-269 serves as the catalytic Proton acceptor. Lys-330 is a catalytic residue. The active-site Nucleophile is Cys-382. The helical transmembrane segment at 482–502 (VWPLAGLAGVLLLWALLGRQL) threads the bilayer.

The protein belongs to the CN hydrolase family. Apolipoprotein N-acyltransferase subfamily.

It localises to the cell inner membrane. It catalyses the reaction N-terminal S-1,2-diacyl-sn-glyceryl-L-cysteinyl-[lipoprotein] + a glycerophospholipid = N-acyl-S-1,2-diacyl-sn-glyceryl-L-cysteinyl-[lipoprotein] + a 2-acyl-sn-glycero-3-phospholipid + H(+). The protein operates within protein modification; lipoprotein biosynthesis (N-acyl transfer). Its function is as follows. Catalyzes the phospholipid dependent N-acylation of the N-terminal cysteine of apolipoprotein, the last step in lipoprotein maturation. The protein is Apolipoprotein N-acyltransferase of Pseudomonas aeruginosa (strain UCBPP-PA14).